A 103-amino-acid polypeptide reads, in one-letter code: Acylphosphatase-2 (103 aa).

Position 2 is an N-acetylserine (serine 2). The Acylphosphatase-like domain maps to 13–103; it reads SVDYEVFGRV…LDFSGFSTRY (91 aa). Residues arginine 28 and asparagine 46 contribute to the active site.

It belongs to the acylphosphatase family.

It carries out the reaction an acyl phosphate + H2O = a carboxylate + phosphate + H(+). Its function is as follows. Its physiological role is not yet clear. The sequence is that of Acylphosphatase-2 (ACYP2) from Anas platyrhynchos (Mallard).